Consider the following 230-residue polypeptide: Orotidine 5'-phosphate decarboxylase (230 aa).

Substrate-binding positions include aspartate 10, lysine 32, 59–68 (DLKLHDIPNT), threonine 118, arginine 179, glutamine 188, glycine 208, and arginine 209. Lysine 61 acts as the Proton donor in catalysis.

This sequence belongs to the OMP decarboxylase family. Type 1 subfamily. Homodimer.

It carries out the reaction orotidine 5'-phosphate + H(+) = UMP + CO2. Its pathway is pyrimidine metabolism; UMP biosynthesis via de novo pathway; UMP from orotate: step 2/2. In terms of biological role, catalyzes the decarboxylation of orotidine 5'-monophosphate (OMP) to uridine 5'-monophosphate (UMP). The protein is Orotidine 5'-phosphate decarboxylase of Opitutus terrae (strain DSM 11246 / JCM 15787 / PB90-1).